The primary structure comprises 445 residues: UDP-N-acetylmuramate--L-alanine ligase (445 aa).

ATP is bound at residue 113–119; it reads GSHGKTS.

The protein belongs to the MurCDEF family.

The protein resides in the cytoplasm. It carries out the reaction UDP-N-acetyl-alpha-D-muramate + L-alanine + ATP = UDP-N-acetyl-alpha-D-muramoyl-L-alanine + ADP + phosphate + H(+). It functions in the pathway cell wall biogenesis; peptidoglycan biosynthesis. Cell wall formation. In Enterococcus faecalis (strain ATCC 700802 / V583), this protein is UDP-N-acetylmuramate--L-alanine ligase.